Reading from the N-terminus, the 453-residue chain is GTPase Der (453 aa).

EngA-type G domains are found at residues 3 to 178 (PKIA…PNNE) and 190 to 363 (LKLA…LECS). GTP-binding positions include 9–16 (GRPNVGKS), 57–61 (DTGGV), 130–133 (NKVD), 196–203 (GRPNAGKS), 243–247 (DTAGI), and 308–311 (NKTD). Positions 364-448 (TRINTGVLNR…PIRIRLRSSH (85 aa)) constitute a KH-like domain.

It belongs to the TRAFAC class TrmE-Era-EngA-EngB-Septin-like GTPase superfamily. EngA (Der) GTPase family. Associates with the 50S ribosomal subunit.

GTPase that plays an essential role in the late steps of ribosome biogenesis. This is GTPase Der from Lawsonia intracellularis (strain PHE/MN1-00).